Reading from the N-terminus, the 68-residue chain is uncharacterized protein (68 aa).

The N-terminal stretch at 1 to 21 is a signal peptide; sequence MELYREYPAWLIFLRRTYAVA.

This is an uncharacterized protein from Escherichia coli O157:H7.